Here is a 674-residue protein sequence, read N- to C-terminus: Pentatricopeptide repeat-containing protein At4g17616 (674 aa).

PPR repeat units follow at residues 409-443 (GSRL…GYPM), 444-478 (ELAT…GLIT), 519-553 (MLYE…KIPP), 554-584 (TVQS…IKRN), and 593-627 (TQDL…DMYN).

This sequence belongs to the PPR family. P subfamily.

This chain is Pentatricopeptide repeat-containing protein At4g17616, found in Arabidopsis thaliana (Mouse-ear cress).